The chain runs to 565 residues: Salicyl-AMP ligase / salicyl-S-ArCP synthetase (565 aa).

ATP contacts are provided by G214, G330, V352, D436, R451, and K542.

The protein belongs to the ATP-dependent AMP-binding enzyme family.

It carries out the reaction salicylate + ATP + H(+) = 2-hydroxybenzoyl-5'-AMP + diphosphate. The enzyme catalyses 2-hydroxybenzoyl-5'-AMP + holo-[ACP] = salicyl-[ACP] + AMP + H(+). It functions in the pathway siderophore biosynthesis; mycobactin biosynthesis. With respect to regulation, inhibited by salicyl-AMS, an acyl-AMP analog. Also inhibited by 5'-O-[(N-acyl)sulfamoyl]adenosines. In terms of biological role, involved in the initial steps of the mycobactin biosynthetic pathway. Catalyzes the salicylation of the aryl carrier protein (ArCP) domain of MbtB through a two-step reaction. The first step is the ATP-dependent adenylation of salicylate to generate a salicyl-AMP intermediate. The second step is the transfer of this activated salicylate to MbtB to form a salicyl-ArCP domain thioester. The polypeptide is Salicyl-AMP ligase / salicyl-S-ArCP synthetase (Mycobacterium tuberculosis (strain ATCC 25618 / H37Rv)).